We begin with the raw amino-acid sequence, 260 residues long: Eukaryotic translation initiation factor 3 subunit G-2 (260 aa).

In terms of domain architecture, RRM spans 180 to 258 (CAVRISNLSE…LILSVEWSKP (79 aa)).

It belongs to the eIF-3 subunit G family. In terms of assembly, component of the eukaryotic translation initiation factor 3 (eIF-3) complex. The eIF-3 complex interacts with pix.

The protein localises to the cytoplasm. Functionally, RNA-binding component of the eukaryotic translation initiation factor 3 (eIF-3) complex, which is involved in protein synthesis of a specialized repertoire of mRNAs and, together with other initiation factors, stimulates binding of mRNA and methionyl-tRNAi to the 40S ribosome. The eIF-3 complex specifically targets and initiates translation of a subset of mRNAs involved in cell proliferation. This subunit can bind 18S rRNA. The sequence is that of Eukaryotic translation initiation factor 3 subunit G-2 from Drosophila grimshawi (Hawaiian fruit fly).